We begin with the raw amino-acid sequence, 342 residues long: Vancomycin B-type resistance protein VanB (342 aa).

ATP contacts are provided by residues K132, 168–170 (FVK), 176–177 (SS), 206–213 (EQAISGCE), and F240. Positions 136–337 (YILTKNAGIA…LPALIDSLIT (202 aa)) constitute an ATP-grasp domain. Position 243 (H243) interacts with substrate. Residue 303 to 304 (NE) participates in ATP binding. 2 residues coordinate Mg(2+): E304 and N306.

It belongs to the D-alanine--D-alanine ligase family. Mg(2+) is required as a cofactor. The cofactor is Mn(2+).

The protein localises to the cell membrane. The enzyme catalyses (R)-lactate + D-alanine + ATP = D-alanyl-(R)-lactate + ADP + phosphate. Required for high-level resistance to glycopeptides antibiotics. D-Ala--D-Ala ligase of altered specificity which catalyzes ester bond formation between D-Ala and various D-hydroxy acids; producing a peptidoglycan which does not terminate in D-alanine but in D-lactate, thus preventing vancomycin binding. The sequence is that of Vancomycin B-type resistance protein VanB (vanB) from Enterococcus faecalis (strain ATCC 700802 / V583).